Consider the following 105-residue polypeptide: Multidrug resistance protein EbrA (105 aa).

Transmembrane regions (helical) follow at residues 2-22 (LVGYIFLTIAICSESIGAAML), 35-55 (ALVVIAYSLAFYMLSLTLNHI), 57-77 (LSLSYATWSGVGTVLTAVIGV), and 84-104 (LNAKGLIGILLLISGVVLLNW).

This sequence belongs to the drug/metabolite transporter (DMT) superfamily. Small multidrug resistance (SMR) (TC 2.A.7.1) family. EbrA/EbrB subfamily. In terms of assembly, the efflux pump is composed of EbrA and EbrB.

It is found in the cell membrane. Functionally, part of a multidrug efflux pump. Confers resistance to cationic lipophilic dyes such as ethidium bromide, acriflavine, pyronine Y and safranin O. The efflux is probably coupled to an influx of protons. The chain is Multidrug resistance protein EbrA (ebrA) from Bacillus atrophaeus.